The chain runs to 490 residues: Betaine aldehyde dehydrogenase (490 aa).

Residues K174, E177, and 227 to 232 (GGIETG) each bind NAD(+). Catalysis depends on residues E249 and C283. Position 384 (E384) interacts with NAD(+).

Belongs to the aldehyde dehydrogenase family. As to quaternary structure, homodimer.

The catalysed reaction is betaine aldehyde + NAD(+) + H2O = glycine betaine + NADH + 2 H(+). It participates in amine and polyamine biosynthesis; betaine biosynthesis via choline pathway; betaine from betaine aldehyde: step 1/1. With respect to regulation, activity is stimulated by low concentrations of salts and by moderate concentrations of glycine betaine. Highly tolerant to high ionic conditions. In vitro, activity is highly stimulated in the presence of proline. Involved in the biosynthesis of the osmoprotectant glycine betaine from choline. Catalyzes the oxidation of betaine aldehyde to betaine. Shows specificity for betaine aldehyde as substrate. Can use both NAD(+) and NADP(+), but NAD(+) is strongly preferred. This Bacillus subtilis (strain 168) protein is Betaine aldehyde dehydrogenase.